Here is a 423-residue protein sequence, read N- to C-terminus: 26S proteasome regulatory subunit 6A homolog B (423 aa).

Serine 18 carries the post-translational modification Phosphoserine. Residue 211–218 (GPPGTGKT) coordinates ATP. Residues lysine 234, lysine 278, and lysine 415 each participate in a glycyl lysine isopeptide (Lys-Gly) (interchain with G-Cter in ubiquitin) cross-link.

The protein belongs to the AAA ATPase family. As to quaternary structure, component of the 19S regulatory particle (RP/PA700) base subcomplex of the 26S proteasome. The 26S proteasome is composed of a core protease (CP), known as the 20S proteasome, capped at one or both ends by the 19S regulatory particle (RP/PA700). The RP/PA700 complex is composed of at least 17 different subunits in two subcomplexes, the base and the lid, which form the portions proximal and distal to the 20S proteolytic core, respectively.

It localises to the cytoplasm. The protein resides in the nucleus. The 26S proteasome is involved in the ATP-dependent degradation of ubiquitinated proteins. The regulatory (or ATPase) complex confers ATP dependency and substrate specificity to the 26S complex. This chain is 26S proteasome regulatory subunit 6A homolog B (RPT5B), found in Arabidopsis thaliana (Mouse-ear cress).